The chain runs to 540 residues: Putative serine protease F56F10.1 (540 aa).

The N-terminal stretch at Met1–Ala16 is a signal peptide. 2 N-linked (GlcNAc...) asparagine glycosylation sites follow: Asn58 and Asn87. The active-site Charge relay system is Ser182. N-linked (GlcNAc...) asparagine glycans are attached at residues Asn270, Asn300, Asn317, Asn343, Asn441, and Asn449. Residue Asp453 is the Charge relay system of the active site. N-linked (GlcNAc...) asparagine glycosylation is present at Asn475. The active-site Charge relay system is His479.

It belongs to the peptidase S28 family.

This is Putative serine protease F56F10.1 from Caenorhabditis elegans.